The sequence spans 382 residues: SOX domain-containing protein dichaete (382 aa).

Disordered regions lie at residues 53 to 142 (GGSP…EGHI) and 346 to 382 (YPSS…PVLY). A compositionally biased stretch (gly residues) spans 60-69 (AGQGVNGSSG). Low complexity predominate over residues 96 to 123 (NSSIGSAGSLGSQSSLGSNGSGLNSSSG). Residues 142–210 (IKRPMNAFMV…LHMKEHPDYK (69 aa)) constitute a DNA-binding region (HMG box). Low complexity predominate over residues 347 to 360 (PSSSTSSPGSSPGT).

As to expression, initially expressed in a pair-rule-like pattern which is rapidly replaced by strong neuroectoderm expression.

It is found in the nucleus. Its function is as follows. Essential for segmentation and CNS development. May modulate the actions of other transcription factors, including gap and pair-rule proteins. This Drosophila melanogaster (Fruit fly) protein is SOX domain-containing protein dichaete (D).